A 393-amino-acid chain; its full sequence is Pyrimidine monooxygenase RutA (393 aa).

Residues 79-80, N145, E154, 170-171, and S220 each bind FMN; these read IK and RY.

The protein belongs to the NtaA/SnaA/DszA monooxygenase family. RutA subfamily.

The catalysed reaction is uracil + FMNH2 + NADH + O2 = (Z)-3-ureidoacrylate + FMN + NAD(+) + H2O + H(+). The enzyme catalyses thymine + FMNH2 + NADH + O2 = (Z)-2-methylureidoacrylate + FMN + NAD(+) + H2O + H(+). In terms of biological role, catalyzes the pyrimidine ring opening between N-3 and C-4 by an unusual flavin hydroperoxide-catalyzed mechanism, adding oxygen atoms in the process to yield ureidoacrylate peracid, that immediately reacts with FMN forming ureidoacrylate and FMN-N(5)-oxide. The FMN-N(5)-oxide reacts spontaneously with NADH to produce FMN. Requires the flavin reductase RutF to regenerate FMN in vivo. This Escherichia coli O139:H28 (strain E24377A / ETEC) protein is Pyrimidine monooxygenase RutA.